We begin with the raw amino-acid sequence, 227 residues long: Uracil-DNA glycosylase (227 aa).

Asp68 acts as the Proton acceptor in catalysis.

It belongs to the uracil-DNA glycosylase (UDG) superfamily. UNG family.

It is found in the cytoplasm. The enzyme catalyses Hydrolyzes single-stranded DNA or mismatched double-stranded DNA and polynucleotides, releasing free uracil.. Functionally, excises uracil residues from the DNA which can arise as a result of misincorporation of dUMP residues by DNA polymerase or due to deamination of cytosine. The polypeptide is Uracil-DNA glycosylase (Mycobacterium leprae (strain Br4923)).